Here is a 527-residue protein sequence, read N- to C-terminus: Sensory neuron membrane protein 1 (527 aa).

Topologically, residues 1–10 (MQLQKPLKIG) are cytoplasmic. A helical transmembrane segment spans residues 11-31 (LGMMGAGLFGIIFGWVLFPVI). The Extracellular segment spans residues 32-456 (LKSQLKKEMA…LKNQLFIPKR (425 aa)). N-linked (GlcNAc...) asparagine glycans are attached at residues Asn67 and Asn229. Cystine bridges form between Cys268–Cys333, Cys297–Cys352, and Cys335–Cys341. Asn440 carries N-linked (GlcNAc...) asparagine glycosylation. A helical transmembrane segment spans residues 457–477 (IVSVVKWLLAGVGFVGLVGSL). Residues 478-527 (VYQFKGKMINFALSPSSAQVTKVNPEINQQNQPKDISIIGESQNPPKVDM) are Cytoplasmic-facing.

The protein belongs to the CD36 family. As to expression, detected in both male and female antennal tissues. Expression is two to three fold higher in male compared to female antenna.

The protein localises to the cell membrane. Functionally, plays an olfactory role that is not restricted to pheromone sensitivity. The protein is Sensory neuron membrane protein 1 of Ostrinia furnacalis (Asian corn borer).